The chain runs to 463 residues: Putative F-box protein At3g29830 (463 aa).

Residues 7 to 55 (RDRISSLPDVVLVMILSFLSFKDNVKTSILSKRWRNICYEAKNISFKES) enclose the F-box domain.

The polypeptide is Putative F-box protein At3g29830 (Arabidopsis thaliana (Mouse-ear cress)).